Consider the following 435-residue polypeptide: Trigger factor (435 aa).

Residues 161-246 form the PPIase FKBP-type domain; it reads GKRVSIDFVG…VNKVEARELP (86 aa).

Belongs to the FKBP-type PPIase family. Tig subfamily.

It localises to the cytoplasm. It carries out the reaction [protein]-peptidylproline (omega=180) = [protein]-peptidylproline (omega=0). Involved in protein export. Acts as a chaperone by maintaining the newly synthesized protein in an open conformation. Functions as a peptidyl-prolyl cis-trans isomerase. The sequence is that of Trigger factor from Vibrio campbellii (strain ATCC BAA-1116).